We begin with the raw amino-acid sequence, 168 residues long: MFWKLSLSLFLVAVLVKVAEARKNRPAGAIPSPYKDGSSNNSERWQHQIKEVLASSQEALVVTERKYLKSDWCKTQPLRQTVSEEGCRSRTILNRFCYGQCNSFYIPRHVKKEEESFQSCAFCKPQRVTSVLVELECPGLDPPFRLKKIQKVKQCRCMSVNLSDSDKQ.

Residues 1–21 (MFWKLSLSLFLVAVLVKVAEA) form the signal peptide. A glycan (N-linked (GlcNAc...) asparagine) is linked at Asn40. 4 cysteine pairs are disulfide-bonded: Cys73–Cys123, Cys87–Cys137, Cys97–Cys155, and Cys101–Cys157. Residues 73 to 163 (CKTQPLRQTV…QCRCMSVNLS (91 aa)) enclose the CTCK domain. The N-linked (GlcNAc...) asparagine glycan is linked to Asn161.

It belongs to the DAN family. Homodimer. Interacts with BMP2, BMP4 and BMP7, but has lower affinity for BMP7 than for BMP2 and BMP4. Binds heparin; this impairs the interaction with BMP2. Post-translationally, N-glycosylated.

It is found in the secreted. In terms of biological role, cytokine that inhibits the activity of BMP2 and BMP4 in a dose-dependent manner, and thereby modulates signaling by BMP family members. Contributes to the regulation of embryonic morphogenesis via BMP family members. Antagonizes BMP4-induced suppression of progesterone production in granulosa cells. The protein is Gremlin-2 (GREM2) of Homo sapiens (Human).